Reading from the N-terminus, the 379-residue chain is Cytochrome b (379 aa).

4 helical membrane-spanning segments follow: residues 33 to 53 (FGSLLGACLTIQVITGLFLAM), 77 to 98 (WTIRYLHANGASMFFMCLFIHV), 113 to 133 (WNIGIMLLFSVMATAFMGYVL), and 178 to 198 (FFALHFILPFIISALAMIHLL). The heme b site is built by histidine 83 and histidine 97. Positions 182 and 196 each coordinate heme b. Histidine 201 contributes to the a ubiquinone binding site. The next 4 helical transmembrane spans lie at 226-246 (TKDFLGLLLLILLLMTLTLFY), 288-308 (LGGVVALILSILILAIIPFLQ), 320-340 (LSQFLFWILVADLLTLTWIGG), and 347-367 (FISIGQTASILYFSLMVFIMP).

It belongs to the cytochrome b family. In terms of assembly, the cytochrome bc1 complex contains 11 subunits: 3 respiratory subunits (MT-CYB, CYC1 and UQCRFS1), 2 core proteins (UQCRC1 and UQCRC2) and 6 low-molecular weight proteins (UQCRH/QCR6, UQCRB/QCR7, UQCRQ/QCR8, UQCR10/QCR9, UQCR11/QCR10 and a cleavage product of UQCRFS1). This cytochrome bc1 complex then forms a dimer. Heme b serves as cofactor.

The protein localises to the mitochondrion inner membrane. Component of the ubiquinol-cytochrome c reductase complex (complex III or cytochrome b-c1 complex) that is part of the mitochondrial respiratory chain. The b-c1 complex mediates electron transfer from ubiquinol to cytochrome c. Contributes to the generation of a proton gradient across the mitochondrial membrane that is then used for ATP synthesis. This is Cytochrome b (MT-CYB) from Lepilemur randrianasoloi (Randrianasoli's sportive lemur).